The sequence spans 1237 residues: MASTSGALVDDNVLEVLRKAQLDAFISQFVFLFNVRRFDHFSHVRDKDMLEIGMQQVQIRQLREQILKMSREMWNRSDPKQVYIQADQSMPAQNSIDEKALIPNEQIKLYELIGEGSFAVVKRGTWTQSNGTHVNVAVKILRDISPNIMDDLRVEASHLLKLQHPSLIRLYGIVRQPAMMVFELCEGGSLLDRLRDDKKAILLVSRLHDYCMQIAKALQFLESKHCVHRDVAARNILLARDERTVKICDFGLMRALKENEQMYTMAPQKKVPFAWCPPEALRHRKFSHASDVWSYGVTIWEVFTFGEEPWVGCRAIDVLKNIDAGERLEKPKYCSERIYQIMKNCWKFNPAERCKFGAIREDLVAAMFLDAVARETYNSIQPGALQLTKGDEVVVVENTGQDWFGQNKKNQKFGTFPRSVVFAQTNNAVAAATAVTPQKVPTAPTIRIPPSHPPPAPLKPLNNNTKTSLNDRTSKISMPVAGSFIHTGHGDPLGGQSWGNPATIADMYLKNPVNGAPLSSMSSGAEIIASKELLTNGGRSTHQPAAPSPAVMSKIRGLSLDLPEYDDFDRAFDDGFSPSKIELPREFCGNDSVISGGSNSIGLANTYVMEPPKQAFDIRGNRVLPPTNKAPVLIPTNPAPSVISSTASAGITLSTNSSQMFTSQDRHSNMPANLFPELQHRLNQGSSTGNGVRPRPASSIGIQNNDLSMLNPQVNRPFSVVNVPIVQQPANIPCLVPTPAPPAPAHFSQPVSSQRVAQQQQNTLQKALNDELKGNLNKRPTGTTAPPSNGFNAPRADVAPVQQRPISSASIPALQPQPIQHIQKPIQPQQVRIPPSTAPVQKPVQVSAPTHSNVAPTTSSQASADARNPLPPKTSPPVSNTPITVAPVHAAPTTSAPSTSVVTRRPTSTTAQMSDEERRSRIAMDISSALPAPSALLYGSNSTSSLPSAAVSTASSVPSTARDNPVETRPSQPHVTMPPKKSSEPILSSEVLQPTRLPSATTSQAKPVTQPIRHPSPPVATVIPTAVVDKKPVSQNQGSNVPLFNITNSSNGYPQLNGYPNYGNGFQAYGYGMNYHQGYPGYQGYNSYGNGMGQLALTHNAVTSLPPLVPSENRFSGTAQPLGESDIMEFLGTQQRQAGSSSRAVPPASASTSAASGITDLSMADKMEVLYREADFTHKGNCDTMVSQCNGNTEQALKLLKQQHLVDMELAMSTETARQALEARQYDLPAAANMLLG.

The Protein kinase domain maps to 107–369; the sequence is IKLYELIGEG…REDLVAAMFL (263 aa). ATP is bound by residues 113–121 and Lys139; that span reads IGEGSFAVV. The active-site Proton acceptor is the Asp230. An SH3 domain is found at 366–426; it reads AMFLDAVARE…PRSVVFAQTN (61 aa). Disordered regions lie at residues 683–704, 741–802, 826–919, 940–986, 999–1018, and 1134–1156; these read NQGS…GIQN, PPAP…APVQ, IQPQ…EERR, SNST…SEPI, SATT…PSPP, and QQRQ…SAAS. Polar residues-rich tracts occupy residues 749-766, 778-791, and 847-863; these read QPVS…TLQK, KRPT…SNGF, and SAPT…SQAS. Low complexity-rich tracts occupy residues 881 to 910 and 940 to 961; these read TPIT…TSTT and SNST…PSTA. Low complexity predominate over residues 1138–1156; that stretch reads AGSSSRAVPPASASTSAAS.

This sequence belongs to the protein kinase superfamily. Tyr protein kinase family. SYK/ZAP-70 subfamily. In terms of tissue distribution, ubiquitously present in all tissues tested. Expressed in the somatic cells of gut, pharynx, body wall muscle, neurons, skin and excretory canal cells.

It localises to the cytoplasm. It catalyses the reaction L-tyrosyl-[protein] + ATP = O-phospho-L-tyrosyl-[protein] + ADP + H(+). Tyrosine-protein kinase which plays a role in RNA-mediated gene silencing by mediating import of double-stranded RNA (dsRNA) into cells. Not required for import of ingested dsRNA into intestinal cells but involved in subsequent export from intestinal cells to internal tissues. The sequence is that of Tyrosine-protein kinase sid-3 (sid-3) from Caenorhabditis elegans.